We begin with the raw amino-acid sequence, 335 residues long: UPF0324 membrane protein LMOf2365_2179 (335 aa).

Transmembrane regions (helical) follow at residues 10–28 (TFWY…SYFL), 33–55 (FLMI…ALFP), 91–113 (AGWR…VYFL), 123–142 (LAIL…VVAI), 155–177 (VAAT…IYPI), 251–270 (VPWF…FGII), 277–299 (FLVI…NVHL), and 309–331 (PFAA…VLLF).

It belongs to the UPF0324 family.

The protein resides in the cell membrane. The polypeptide is UPF0324 membrane protein LMOf2365_2179 (Listeria monocytogenes serotype 4b (strain F2365)).